A 292-amino-acid chain; its full sequence is 33 kDa chaperonin (292 aa).

2 cysteine pairs are disulfide-bonded: Cys-230-Cys-232 and Cys-263-Cys-266.

This sequence belongs to the HSP33 family. Under oxidizing conditions two disulfide bonds are formed involving the reactive cysteines. Under reducing conditions zinc is bound to the reactive cysteines and the protein is inactive.

Its subcellular location is the cytoplasm. Functionally, redox regulated molecular chaperone. Protects both thermally unfolding and oxidatively damaged proteins from irreversible aggregation. Plays an important role in the bacterial defense system toward oxidative stress. The polypeptide is 33 kDa chaperonin (Salmonella typhi).